Reading from the N-terminus, the 880-residue chain is Alanine--tRNA ligase (880 aa).

Zn(2+) contacts are provided by H563, H567, C665, and H669.

This sequence belongs to the class-II aminoacyl-tRNA synthetase family. It depends on Zn(2+) as a cofactor.

It is found in the cytoplasm. It catalyses the reaction tRNA(Ala) + L-alanine + ATP = L-alanyl-tRNA(Ala) + AMP + diphosphate. Its function is as follows. Catalyzes the attachment of alanine to tRNA(Ala) in a two-step reaction: alanine is first activated by ATP to form Ala-AMP and then transferred to the acceptor end of tRNA(Ala). Also edits incorrectly charged Ser-tRNA(Ala) and Gly-tRNA(Ala) via its editing domain. The protein is Alanine--tRNA ligase of Desulforudis audaxviator (strain MP104C).